The primary structure comprises 91 residues: Large ribosomal subunit protein uL23 (91 aa).

This sequence belongs to the universal ribosomal protein uL23 family. As to quaternary structure, part of the 50S ribosomal subunit. Contacts protein L29, and trigger factor when it is bound to the ribosome.

One of the early assembly proteins it binds 23S rRNA. One of the proteins that surrounds the polypeptide exit tunnel on the outside of the ribosome. Forms the main docking site for trigger factor binding to the ribosome. The sequence is that of Large ribosomal subunit protein uL23 from Staphylococcus haemolyticus (strain JCSC1435).